The following is a 350-amino-acid chain: DNA polymerase IV (350 aa).

One can recognise a UmuC domain in the interval 7 to 188; it reads IIHIDMDYFF…LPVKKLFGVG (182 aa). Asp-11 and Asp-106 together coordinate Mg(2+). Residue Glu-107 is part of the active site.

The protein belongs to the DNA polymerase type-Y family. As to quaternary structure, monomer. Requires Mg(2+) as cofactor.

Its subcellular location is the cytoplasm. The catalysed reaction is DNA(n) + a 2'-deoxyribonucleoside 5'-triphosphate = DNA(n+1) + diphosphate. Poorly processive, error-prone DNA polymerase involved in untargeted mutagenesis. Copies undamaged DNA at stalled replication forks, which arise in vivo from mismatched or misaligned primer ends. These misaligned primers can be extended by PolIV. Exhibits no 3'-5' exonuclease (proofreading) activity. May be involved in translesional synthesis, in conjunction with the beta clamp from PolIII. This is DNA polymerase IV from Francisella philomiragia subsp. philomiragia (strain ATCC 25017 / CCUG 19701 / FSC 153 / O#319-036).